A 99-amino-acid polypeptide reads, in one-letter code: Small ribosomal subunit protein bS20 (99 aa).

The protein belongs to the bacterial ribosomal protein bS20 family.

Binds directly to 16S ribosomal RNA. In Caldicellulosiruptor bescii (strain ATCC BAA-1888 / DSM 6725 / KCTC 15123 / Z-1320) (Anaerocellum thermophilum), this protein is Small ribosomal subunit protein bS20.